The sequence spans 66 residues: MSETSNKKLKITQYRSIIGCSKKQKATIKCLGLGRPNYSRVLNDNPLLQGQLRVVQHLVKVEEVSE.

The protein belongs to the universal ribosomal protein uL30 family. Part of the 50S ribosomal subunit.

This is Large ribosomal subunit protein uL30 from Chloroherpeton thalassium (strain ATCC 35110 / GB-78).